A 482-amino-acid chain; its full sequence is Exodeoxyribonuclease 7 large subunit (482 aa).

Residues 457–482 (TLDTGGAPAKPASKPKQKPPEQGSLF) are disordered.

This sequence belongs to the XseA family. Heterooligomer composed of large and small subunits.

It is found in the cytoplasm. The enzyme catalyses Exonucleolytic cleavage in either 5'- to 3'- or 3'- to 5'-direction to yield nucleoside 5'-phosphates.. Bidirectionally degrades single-stranded DNA into large acid-insoluble oligonucleotides, which are then degraded further into small acid-soluble oligonucleotides. This chain is Exodeoxyribonuclease 7 large subunit, found in Ruegeria pomeroyi (strain ATCC 700808 / DSM 15171 / DSS-3) (Silicibacter pomeroyi).